The following is a 210-amino-acid chain: Cytochrome c biogenesis ATP-binding export protein CcmA (210 aa).

The ABC transporter domain maps to 3-209 (LTVTNLACAR…PADDPFAGVT (207 aa)). An ATP-binding site is contributed by 35–42 (GPNGIGKT).

The protein belongs to the ABC transporter superfamily. CcmA exporter (TC 3.A.1.107) family. In terms of assembly, the complex is composed of two ATP-binding proteins (CcmA) and two transmembrane proteins (CcmB).

The protein resides in the cell inner membrane. It catalyses the reaction heme b(in) + ATP + H2O = heme b(out) + ADP + phosphate + H(+). In terms of biological role, part of the ABC transporter complex CcmAB involved in the biogenesis of c-type cytochromes; once thought to export heme, this seems not to be the case, but its exact role is uncertain. Responsible for energy coupling to the transport system. The polypeptide is Cytochrome c biogenesis ATP-binding export protein CcmA (Cereibacter sphaeroides (strain ATCC 17023 / DSM 158 / JCM 6121 / CCUG 31486 / LMG 2827 / NBRC 12203 / NCIMB 8253 / ATH 2.4.1.) (Rhodobacter sphaeroides)).